Reading from the N-terminus, the 450-residue chain is C4-dicarboxylate transport protein (450 aa).

The next 8 membrane-spanning stretches (helical) occupy residues 25-45, 56-76, 90-110, 162-182, 200-220, 234-254, 319-339, and 367-387; these read VVFA…YGAA, LIKM…IASM, MAYF…VANV, ILQV…VGDA, LVNI…AFTI, LVLT…GAVA, IYMT…LTLG, and AATL…ILGV.

Belongs to the dicarboxylate/amino acid:cation symporter (DAACS) (TC 2.A.23) family.

Its subcellular location is the cell inner membrane. Responsible for the transport of dicarboxylates such as succinate, fumarate, and malate from the periplasm across the membrane. The chain is C4-dicarboxylate transport protein from Acidovorax sp. (strain JS42).